Consider the following 77-residue polypeptide: Small ribosomal subunit protein bS20 (77 aa).

Belongs to the bacterial ribosomal protein bS20 family.

Its function is as follows. Binds directly to 16S ribosomal RNA. The protein is Small ribosomal subunit protein bS20 of Streptococcus uberis (strain ATCC BAA-854 / 0140J).